A 190-amino-acid chain; its full sequence is Guanylate kinase (190 aa).

A Guanylate kinase-like domain is found at 3 to 185 (NYIFIVSAPS…SLEQFCKYFE (183 aa)). Residue 10–17 (APSGAGKS) coordinates ATP.

This sequence belongs to the guanylate kinase family.

The protein localises to the cytoplasm. It carries out the reaction GMP + ATP = GDP + ADP. Its function is as follows. Essential for recycling GMP and indirectly, cGMP. The chain is Guanylate kinase from Francisella tularensis subsp. tularensis (strain FSC 198).